Here is a 283-residue protein sequence, read N- to C-terminus: ESX-1 secretion-associated protein EspG1 (283 aa).

Belongs to the EspG family. Interacts specifically with ESX-1-dependent PE/PPE proteins. Interacts with PPE68.

It is found in the cytoplasm. Functionally, specific chaperone for cognate PE/PPE proteins. Plays an important role in preventing aggregation of PE/PPE dimers. In Mycobacterium tuberculosis (strain ATCC 25618 / H37Rv), this protein is ESX-1 secretion-associated protein EspG1.